The primary structure comprises 98 residues: DNA-binding protein Fis (98 aa).

A DNA-binding region (H-T-H motif) is located at residues 74–93 (QTRAALMMGINRGTLRKKLK).

It belongs to the transcriptional regulatory Fis family. In terms of assembly, homodimer.

Functionally, activates ribosomal RNA transcription. Plays a direct role in upstream activation of rRNA promoters. The polypeptide is DNA-binding protein Fis (Yersinia enterocolitica serotype O:8 / biotype 1B (strain NCTC 13174 / 8081)).